A 437-amino-acid chain; its full sequence is Methylenetetrahydrofolate--tRNA-(uracil-5-)-methyltransferase TrmFO (437 aa).

8–13 (GAGLAG) is a binding site for FAD.

Belongs to the MnmG family. TrmFO subfamily. Requires FAD as cofactor.

It localises to the cytoplasm. It carries out the reaction uridine(54) in tRNA + (6R)-5,10-methylene-5,6,7,8-tetrahydrofolate + NADH + H(+) = 5-methyluridine(54) in tRNA + (6S)-5,6,7,8-tetrahydrofolate + NAD(+). The enzyme catalyses uridine(54) in tRNA + (6R)-5,10-methylene-5,6,7,8-tetrahydrofolate + NADPH + H(+) = 5-methyluridine(54) in tRNA + (6S)-5,6,7,8-tetrahydrofolate + NADP(+). In terms of biological role, catalyzes the folate-dependent formation of 5-methyl-uridine at position 54 (M-5-U54) in all tRNAs. This is Methylenetetrahydrofolate--tRNA-(uracil-5-)-methyltransferase TrmFO from Desulfitobacterium hafniense (strain Y51).